Here is a 399-residue protein sequence, read N- to C-terminus: Phosphoglycerate kinase (399 aa).

Residues 21–23, R36, 59–62, R120, and R158 contribute to the substrate site; these read DFN and HLGR. Residues K209, G297, E328, and 355–358 each bind ATP; that span reads GGDS.

It belongs to the phosphoglycerate kinase family. Monomer.

Its subcellular location is the cytoplasm. It catalyses the reaction (2R)-3-phosphoglycerate + ATP = (2R)-3-phospho-glyceroyl phosphate + ADP. Its pathway is carbohydrate degradation; glycolysis; pyruvate from D-glyceraldehyde 3-phosphate: step 2/5. The protein is Phosphoglycerate kinase of Streptococcus thermophilus (strain ATCC BAA-250 / LMG 18311).